Here is a 687-residue protein sequence, read N- to C-terminus: Glycine--tRNA ligase beta subunit (687 aa).

This sequence belongs to the class-II aminoacyl-tRNA synthetase family. Tetramer of two alpha and two beta subunits.

Its subcellular location is the cytoplasm. It carries out the reaction tRNA(Gly) + glycine + ATP = glycyl-tRNA(Gly) + AMP + diphosphate. The sequence is that of Glycine--tRNA ligase beta subunit from Neisseria gonorrhoeae (strain ATCC 700825 / FA 1090).